Reading from the N-terminus, the 266-residue chain is ATP synthase subunit a (266 aa).

7 helical membrane-spanning segments follow: residues 28–48 (ISFT…AIFM), 90–110 (LIFT…VPLF), 125–145 (VTVT…VGFT), 158–178 (HGTP…SFIL), 187–207 (LFVA…FIVN), 216–236 (AFLA…MIGI), and 239–259 (LEFL…SLYL).

Belongs to the ATPase A chain family. In terms of assembly, F-type ATPases have 2 components, CF(1) - the catalytic core - and CF(0) - the membrane proton channel. CF(1) has five subunits: alpha(3), beta(3), gamma(1), delta(1), epsilon(1). CF(0) has three main subunits: a(1), b(2) and c(9-12). The alpha and beta chains form an alternating ring which encloses part of the gamma chain. CF(1) is attached to CF(0) by a central stalk formed by the gamma and epsilon chains, while a peripheral stalk is formed by the delta and b chains.

The protein localises to the cell inner membrane. Key component of the proton channel; it plays a direct role in the translocation of protons across the membrane. The chain is ATP synthase subunit a from Zymomonas mobilis subsp. mobilis (strain ATCC 31821 / ZM4 / CP4).